The chain runs to 150 residues: Large ribosomal subunit protein bL9 (150 aa).

It belongs to the bacterial ribosomal protein bL9 family.

Binds to the 23S rRNA. This is Large ribosomal subunit protein bL9 from Burkholderia cenocepacia (strain HI2424).